A 1044-amino-acid polypeptide reads, in one-letter code: MATPAGLERWVQDELHSVLGLSERHVAQFLIGTAQRCTSAEEFVQRLRDTDTLDLSGPARDFALRLWNKVPRKAVVEKPARAAEREARALLEKNRSYRLLEDSEESSEETVSRAGSSLQKKRKKRKHLRKKREEEEEEEEEEASEKGKKKTGGSKQQTEKPESEDEWERTERERLQDLEERDAFAERVRQRDKDRTRNVLERSDKKAYEEAQKRLKMAEEDRKAMVPELRKKSRREYLAKREREKLEDLEAELADEEFLFGDVELSRHERQELKYKRRVRDLAREYRAAGEQEKLEATNRYHMPKETRGQPARAVDLVEEESGAPGEEQRRWEEARLGAASLKFGARDAASQEPKYQLVLEEEETIEFVRATQLQGNEEPSAPPTSTQAQQKESIQAVRRSLPVFPFREELLAAIANHQVLIIEGETGSGKTTQIPQYLFEEGYTNKGMKIACTQPRRVAAMSVAARVAREMGVKLGNEVGYSIRFEDCTSERTVLRYMTDGMLLREFLSEPDLASYSVVMVDEAHERTLHTDILFGLIKDVARFRPELKVLVASATMDTARFSTFFDDAPVFRIPGRRFPVDIFYTKAPEADYLEACVVSVLQIHVTQPPGDILVFLTGQEEIEAACEMLQDRCRRLGSKIRELLVLPIYANLPSDMQARIFQPTPPGARKVVVATNIAETSLTIEGIIYVLDPGFCKQKSYNPRTGMESLTVTPCSKASANQRAGRAGRVAAGKCFRLYTAWAYQHELEETTVPEIQRTSLGNVVLLLKSLGIHDLMHFDFLDPPPYETLLLALEQLYALGALNHLGELTTSGRKMAELPVDPMLSKMILASEKYSCSEEILTVAAMLSVNNSIFYRPKDKVVHADNARVNFFLPGGDHLVLLNVYTQWAESGYSSQWCYENFVQFRSMRRARDVREQLEGLLERVEVGLSSCQGDYIRVRKAITAGYFYHTARLTRSGYRTVKQQQTVFIHPNSSLFEQQPRWLLYHELVLTTKEFMRQVLEIESSWLLEVAPHYYKAKELEDPHAKKMPKKIGKTREELG.

2 disordered regions span residues 101–210 and 374–394; these read EDSE…AYEE and LQGNEEPSAPPTSTQAQQKES. Serine 103, serine 106, and serine 107 each carry phosphoserine. A compositionally biased stretch (basic residues) spans 119–130; it reads QKKRKKRKHLRK. A compositionally biased stretch (acidic residues) spans 134–143; it reads EEEEEEEEEA. The residue at position 163 (serine 163) is a Phosphoserine. Residues 169 to 210 show a composition bias toward basic and acidic residues; that stretch reads RTERERLQDLEERDAFAERVRQRDKDRTRNVLERSDKKAYEE. Positions 412 to 576 constitute a Helicase ATP-binding domain; it reads LAAIANHQVL…FDDAPVFRIP (165 aa). Residue 425-432 participates in ATP binding; sequence GETGSGKT. The short motif at 523-526 is the DEAH box element; the sequence is DEAH. Positions 601-774 constitute a Helicase C-terminal domain; that stretch reads SVLQIHVTQP…NVVLLLKSLG (174 aa). A Phosphothreonine modification is found at threonine 715.

Belongs to the DEAD box helicase family. DEAH subfamily. DDX16/PRP8 sub-subfamily. As to quaternary structure, component of pre-catalytic spliceosome complexes. Component of the minor spliceosome, which splices U12-type introns. Interacts with GPKOW. Interacts with TRIM6. Interacts with RIGI.

It localises to the nucleus. The protein localises to the nucleoplasm. The protein resides in the cytoplasm. The catalysed reaction is ATP + H2O = ADP + phosphate + H(+). Its function is as follows. Required for pre-mRNA splicing as a component of the spliceosome. Contributes to pre-mRNA splicing after spliceosome formation and prior to the first transesterification reaction. As a component of the minor spliceosome, involved in the splicing of U12-type introns in pre-mRNAs. Also plays a role in innate antiviral response by acting as a pattern recognition receptor sensing splicing signals in viral RNA. Mechanistically, TRIM6 promotes the interaction between unanchored 'Lys-48'-polyubiquitin chains and DHX16, leading to DHX16 interaction with RIGI and ssRNA to amplify RIGI-dependent innate antiviral immune responses. This chain is Pre-mRNA-splicing factor ATP-dependent RNA helicase DHX16 (DHX16), found in Pan troglodytes (Chimpanzee).